Reading from the N-terminus, the 415-residue chain is MKSSELFNRAKTLMPGGVSSPVRAIKPYPFYVERAAGSHLTTVDGADLIDCCLGYGPLILGHAHPEVREAIERQLEKGWLYGTPTPLELDLAGIITGDHPAVEMVRFVSSGSEATMAAIRLARGYTGKQDIIKIEGGFHGAHDAVLVKAGSGATTLGVPDSAGVLADLTAHTRQVPYNDTEALEALLAGNDDVAAFILEPVMGNVGPVLPDDGYLADVREITAAHDVLLILDEVITGYRAGIGGAEVLYDVKPDLATFGKIIGGGLPIGAFGGRCDIMELVAPAGPVYQAGTFSGNPASLAAGYATLRHLHDHPEIYRRLDDATRAIGEAAADAGKGTFVRIGSLFKHFFRDAAPRDYREVKECDTEAFSRFWKAMLEAGIFLPPSQFETNFLSAAHTTQDIKQIAEAYGSCLFA.

Lysine 260 carries the post-translational modification N6-(pyridoxal phosphate)lysine.

It belongs to the class-III pyridoxal-phosphate-dependent aminotransferase family. HemL subfamily. Requires pyridoxal 5'-phosphate as cofactor.

Its subcellular location is the cytoplasm. It carries out the reaction (S)-4-amino-5-oxopentanoate = 5-aminolevulinate. It functions in the pathway porphyrin-containing compound metabolism; protoporphyrin-IX biosynthesis; 5-aminolevulinate from L-glutamyl-tRNA(Glu): step 2/2. In Methanoculleus marisnigri (strain ATCC 35101 / DSM 1498 / JR1), this protein is Glutamate-1-semialdehyde 2,1-aminomutase.